The chain runs to 513 residues: Glutamate--tRNA ligase 2 (513 aa).

The 'HIGH' region motif lies at 11-21 (PSPTGFLHIGS). Positions 240 to 244 (KLSKR) match the 'KMSKS' region motif. Lysine 243 lines the ATP pocket. An RPE1 insert domain is found at 335-383 (NTLLRHLPYREEFGGNTERSTAAYIDIREDASTGLTYKLPLAVELPKKF).

It belongs to the class-I aminoacyl-tRNA synthetase family. Glutamate--tRNA ligase type 1 subfamily. Monomer.

It localises to the cytoplasm. The catalysed reaction is tRNA(Glu) + L-glutamate + ATP = L-glutamyl-tRNA(Glu) + AMP + diphosphate. Its function is as follows. Catalyzes the attachment of glutamate to tRNA(Glu) in a two-step reaction: glutamate is first activated by ATP to form Glu-AMP and then transferred to the acceptor end of tRNA(Glu). This chain is Glutamate--tRNA ligase 2, found in Rickettsia conorii (strain ATCC VR-613 / Malish 7).